Consider the following 373-residue polypeptide: 3-isopropylmalate dehydrogenase AMT6 (373 aa).

Residue 77–79 participates in NADP(+) binding; that stretch reads VGG. Substrate contacts are provided by Arg97 and Arg136. Asp227, Asp252, and Asp256 together coordinate Mg(2+). 284–289 lines the NADP(+) pocket; the sequence is SRIRGL.

This sequence belongs to the isocitrate and isopropylmalate dehydrogenases family. In terms of assembly, homodimer. Mg(2+) serves as cofactor. Mn(2+) is required as a cofactor.

The enzyme catalyses (2R,3S)-3-isopropylmalate + NAD(+) = 4-methyl-2-oxopentanoate + CO2 + NADH. The protein operates within amino-acid biosynthesis; L-leucine biosynthesis; L-leucine from 3-methyl-2-oxobutanoate: step 3/4. Its pathway is mycotoxin biosynthesis. In terms of biological role, 3-isopropylmalate dehydrogenase; part of the gene clusters that mediate the biosynthesis of AM-toxins, host-selective toxins (HSTs) causing Alternaria blotch on apple, a worldwide distributed disease. AM-toxins are cyclic depsipeptides containing the 3 residues 2-hydroxy-isovaleric acid (2-HIV), dehydroalanine, L-alanine which are common for all 3 AM-toxins I to III. The fourth precursor is L-alpha-amino-methoxyphenyl-valeric acid (L-Amv) for AM-toxin I, L-alpha-amino-phenyl-valeric acid (L-Apv) for AM-toxin II, and L-alpha-amino-hydroxyphenyl-valeric acid (L-Ahv) for AM-toxin III. AM-toxins have two target sites for affecting susceptible apple cells; they cause invagination of the plasma membrane and electrolyte loss and chloroplast disorganization. The non-ribosomal peptide synthetase AMT1 contains 4 catalytic modules and is responsible for activation of each residue in AM-toxin. The aldo-keto reductase AMT2 catalyzes the conversion of 2-keto-isovaleric acid (2-KIV) to 2-hydroxy-isovaleric acid (2-HIV), one of the precursor residues incorporated by AMT1 during AM-toxin biosynthesis, by reduction of its ketone to an alcohol. The cytochrome P450 monooxygenase AMT3 and the thioesterase AMT4 are also important for AM-toxin production, but their exact function within the AM-toxin biosynthesis are not known yet. Up to 21 proteins (including AMT1 to AMT4) are predicted to be involved in AM-toxin biosynthesis since their expression ishighly up-regulated in AM-toxin-producing cultures. The polypeptide is 3-isopropylmalate dehydrogenase AMT6 (Alternaria alternata (Alternaria rot fungus)).